The primary structure comprises 89 residues: Small ribosomal subunit protein uS15 (89 aa).

This sequence belongs to the universal ribosomal protein uS15 family. As to quaternary structure, part of the 30S ribosomal subunit. Forms a bridge to the 50S subunit in the 70S ribosome, contacting the 23S rRNA.

Its function is as follows. One of the primary rRNA binding proteins, it binds directly to 16S rRNA where it helps nucleate assembly of the platform of the 30S subunit by binding and bridging several RNA helices of the 16S rRNA. Forms an intersubunit bridge (bridge B4) with the 23S rRNA of the 50S subunit in the ribosome. This chain is Small ribosomal subunit protein uS15, found in Zymomonas mobilis subsp. mobilis (strain ATCC 31821 / ZM4 / CP4).